Consider the following 288-residue polypeptide: Phenazine biosynthesis-like domain-containing protein (288 aa).

The active site involves E46.

Belongs to the PhzF family. Interacts with UNRIP/MAWD.

This chain is Phenazine biosynthesis-like domain-containing protein (PBLD), found in Pongo abelii (Sumatran orangutan).